The chain runs to 389 residues: Jasmonate O-methyltransferase (389 aa).

Tyr18 contacts S-adenosyl-L-homocysteine. Jasmonate is bound at residue Gln25. Positions 60, 65, 97, 98, 142, and 143 each coordinate S-adenosyl-L-homocysteine. 2 residues coordinate jasmonate: His163 and Trp164. 4 residues coordinate Mg(2+): Asn186, Asp272, Phe274, and Asn275.

The protein belongs to the methyltransferase superfamily. Type-7 methyltransferase family. Requires Mg(2+) as cofactor. Expressed in rosettes, cauline leaves and developing flowers but not in young seedlings.

It is found in the cytoplasm. The protein localises to the nucleus. The catalysed reaction is jasmonate + S-adenosyl-L-methionine = methyl (-)-jasmonate + S-adenosyl-L-homocysteine. The protein operates within lipid metabolism; oxylipin biosynthesis. Functionally, catalyzes the methylation of jasmonate into methyljasmonate, a plant volatile that acts as an important cellular regulator mediating diverse developmental processes and defense responses. The polypeptide is Jasmonate O-methyltransferase (Arabidopsis thaliana (Mouse-ear cress)).